Here is a 570-residue protein sequence, read N- to C-terminus: MSNLLEAESSCDSKSLGVDDFTSKRCREIDKKALLITILLTFFVSLCVFLSIILPLIFLVIIPHAQSDRKIKDTNMETTNLGVNIIDEIFNSTQVPEWAKNSLLDTNTWLDTSDFNTSFTNETFAGLYTMGIFDKYDDSVQANPNVPPLNEPFPYGRLPIRGVNLGGWLSMEPFITPSFFQVKNETAYLVKDELSLHAYLGENATSVIENHYNTFVTKQTFYEIREAGLDHVRITFPYWILYSNEITNVSGIGWRYLLRSIEWAREQGLRVNLDLHAAPGNQNSWNHGGYLNQMEWLDGTVKGEENSQFTLKIHERLASFFSQKRYRNVVTIYGALNEPNFFVLDEHKITDWHKQAYAVIRQSNFTGLISLSDGFRGPGNWEDHFDPFHFPNILIDVHRYIIFNDFLIGLRPKDKLNVICKSWNEEMKLKAKLPTIIGEWSLADTDCAKFLNNVGEGARWDGTFTPNGGVASCSEKVGCRCDFANQDPENYEDSYRKFLYALATSQIETFDKTWGWFYWNWDTENATQWSYKKSWLAGLLPRLAYSTTKDFNCSMLDSKSFMEFDEQSEF.

N-linked (GlcNAc...) asparagine glycosylation is found at asparagine 91, asparagine 116, asparagine 121, asparagine 184, asparagine 203, and asparagine 248. Glutamate 338 functions as the Proton donor in the catalytic mechanism. Asparagine 364 carries an N-linked (GlcNAc...) asparagine glycan. The active-site Nucleophile is the glutamate 439. Residues asparagine 525 and asparagine 552 are each glycosylated (N-linked (GlcNAc...) asparagine).

This sequence belongs to the glycosyl hydrolase 5 (cellulase A) family.

The protein localises to the secreted. The catalysed reaction is Successive hydrolysis of beta-D-glucose units from the non-reducing ends of (1-&gt;3)-beta-D-glucans, releasing alpha-glucose.. This Schizosaccharomyces pombe (strain 972 / ATCC 24843) (Fission yeast) protein is Glucan 1,3-beta-glucosidase 2 (exg2).